The primary structure comprises 218 residues: Octanoyltransferase (218 aa).

The region spanning 31 to 207 (AQTPDELWLL…QLAAQLGYAE (177 aa)) is the BPL/LPL catalytic domain. Substrate contacts are provided by residues 70–77 (RGGQVTYH), 137–139 (SLG), and 150–152 (GLA). C168 (acyl-thioester intermediate) is an active-site residue.

The protein belongs to the LipB family.

Its subcellular location is the cytoplasm. The catalysed reaction is octanoyl-[ACP] + L-lysyl-[protein] = N(6)-octanoyl-L-lysyl-[protein] + holo-[ACP] + H(+). It functions in the pathway protein modification; protein lipoylation via endogenous pathway; protein N(6)-(lipoyl)lysine from octanoyl-[acyl-carrier-protein]: step 1/2. Its function is as follows. Catalyzes the transfer of endogenously produced octanoic acid from octanoyl-acyl-carrier-protein onto the lipoyl domains of lipoate-dependent enzymes. Lipoyl-ACP can also act as a substrate although octanoyl-ACP is likely to be the physiological substrate. The chain is Octanoyltransferase from Azotobacter vinelandii (strain DJ / ATCC BAA-1303).